Consider the following 156-residue polypeptide: Protein GLUTAMINE DUMPER 4 (156 aa).

Residues 1–39 (MRPLSIKPTSLDVARHATSVESFGNHRPPISPWHSPVPY) are Extracellular-facing. A helical transmembrane segment spans residues 40-60 (LFGGLAAMLGLIAFALLILAC). At 61-156 (SYWRLSTSGD…AKENEETTSQ (96 aa)) the chain is on the cytoplasmic side. A disordered region spans residues 67–87 (TSGDDSGERVDEEKESRSGVK). Residues 72–84 (SGERVDEEKESRS) show a composition bias toward basic and acidic residues. Residues 99-103 (VIMAG) carry the VIMAG motif. Residues 136–156 (AGEEKMGDREKAKENEETTSQ) form a disordered region.

Belongs to the GLUTAMINE DUMPER 1 (TC 9.B.60) family. As to expression, expressed in the vascular tissues, even in the minor veins of the leaves.

Its subcellular location is the membrane. Its function is as follows. Probable subunit of an amino acid transporter involved in the regulation of the amino acid metabolism. Stimulates amino acid export by activating nonselective amino acid facilitators. The sequence is that of Protein GLUTAMINE DUMPER 4 (GDU4) from Arabidopsis thaliana (Mouse-ear cress).